The sequence spans 620 residues: Protein phosphatase 2C-like domain-containing protein 1 (620 aa).

In terms of domain architecture, PPM-type phosphatase spans 173–611 (GIAICSNNNS…DSITVMVMFL (439 aa)).

The protein belongs to the PP2C family.

The chain is Protein phosphatase 2C-like domain-containing protein 1 (Pp2d1) from Mus musculus (Mouse).